A 396-amino-acid chain; its full sequence is Cystathionine beta-lyase (396 aa).

Lys-214 carries the post-translational modification N6-(pyridoxal phosphate)lysine.

The protein belongs to the trans-sulfuration enzymes family. In terms of assembly, homodimer. Pyridoxal 5'-phosphate is required as a cofactor.

The protein localises to the cytoplasm. It catalyses the reaction L,L-cystathionine + H2O = L-homocysteine + pyruvate + NH4(+). The enzyme catalyses an S-substituted L-cysteine + H2O = a thiol + pyruvate + NH4(+). Its pathway is amino-acid biosynthesis; L-methionine biosynthesis via de novo pathway; L-homocysteine from L-cystathionine: step 1/1. Catalyzes the cleavage of cystathionine to homocysteine, pyruvate and ammonia during methionine biosynthesis. Also has cytotoxic activity toward osteogenic, osteosarcoma and tracheal cells, in vitro. The chemical basis for cell toxicity might be the formation and subsequent transfer of sulfane-sulfur to proteins, derived via beta-cystathionase cleavage of L-cystine. This is Cystathionine beta-lyase (metC) from Bordetella avium.